The following is a 340-amino-acid chain: GTP 3',8-cyclase (340 aa).

In terms of domain architecture, Radical SAM core spans 8–229; sequence KLGRPIRDLR…IEQHFEISPV (222 aa). Position 17 (Arg-17) interacts with GTP. Positions 24 and 28 each coordinate [4Fe-4S] cluster. Tyr-30 contributes to the S-adenosyl-L-methionine binding site. Cys-31 contributes to the [4Fe-4S] cluster binding site. Arg-71 provides a ligand contact to GTP. Residue Gly-75 coordinates S-adenosyl-L-methionine. Thr-102 is a binding site for GTP. Ser-126 lines the S-adenosyl-L-methionine pocket. Residue Lys-163 coordinates GTP. Met-197 contacts S-adenosyl-L-methionine. Residues Cys-261 and Cys-264 each contribute to the [4Fe-4S] cluster site. 266-268 is a GTP binding site; it reads RAR. Residue Cys-278 coordinates [4Fe-4S] cluster.

It belongs to the radical SAM superfamily. MoaA family. In terms of assembly, monomer and homodimer. [4Fe-4S] cluster serves as cofactor.

It carries out the reaction GTP + AH2 + S-adenosyl-L-methionine = (8S)-3',8-cyclo-7,8-dihydroguanosine 5'-triphosphate + 5'-deoxyadenosine + L-methionine + A + H(+). It functions in the pathway cofactor biosynthesis; molybdopterin biosynthesis. Catalyzes the cyclization of GTP to (8S)-3',8-cyclo-7,8-dihydroguanosine 5'-triphosphate. In Staphylococcus epidermidis (strain ATCC 35984 / DSM 28319 / BCRC 17069 / CCUG 31568 / BM 3577 / RP62A), this protein is GTP 3',8-cyclase.